We begin with the raw amino-acid sequence, 390 residues long: MECPFQIQVCISDRFFAFPHNLVEPQSDVGNKLIENLIVYVPTDDDRLYIDKKQFPKFNSVLVYRHEHDVNIDSRSPKKTASATIVYWNPLVPITEIGAGETRVFSVLLTNNLFYCNTMIVHHENPKCPIEFTYPETDMQSACSALLKNRNGQSVPPPIKSNLRPIACEIPLSHFKELVESNDFLLCFNLETSTMVKILSLKRIFCIFQYRKQPARYVINLPHEEIDNLYNKLNWERTRRLMKGDVPSNCATVNRSSLKYIKQAQSLLGIPDYSQTVVDFVKMFQKIIFPYQLVPNVIIKLNNFDQMVSSAPNKAEPYKKIRLFCKNDSIAISSSGIVPINMPDFSPPNTFDYSDYANRTNINFVTQRVLTDGGFSSGITVTPVKYNYYL.

Its subcellular location is the host cytoplasm. It localises to the host nucleus. In terms of biological role, plays a role in the transport of the budded virion (BV) to the host nucleus and for occlusion of viral progeny. The polypeptide is Protein AC109 (ORF109) (Lepidoptera (butterflies and moths)).